A 224-amino-acid chain; its full sequence is UPF0441 protein ECA0329 (224 aa).

Residues 180-224 are disordered; sequence TALAPKPATTSTITRGGFGETVAKQNSMQRSSASSNSSSSRSMGG. The segment covering 204-224 has biased composition (low complexity); sequence QNSMQRSSASSNSSSSRSMGG.

Belongs to the UPF0441 family.

The chain is UPF0441 protein ECA0329 from Pectobacterium atrosepticum (strain SCRI 1043 / ATCC BAA-672) (Erwinia carotovora subsp. atroseptica).